A 243-amino-acid chain; its full sequence is Carboxy-S-adenosyl-L-methionine synthase (243 aa).

S-adenosyl-L-methionine-binding positions include Y35, 68–70 (GCS), 92–93 (DN), and R199.

Belongs to the class I-like SAM-binding methyltransferase superfamily. Cx-SAM synthase family. As to quaternary structure, homodimer.

It carries out the reaction prephenate + S-adenosyl-L-methionine = carboxy-S-adenosyl-L-methionine + 3-phenylpyruvate + H2O. Functionally, catalyzes the conversion of S-adenosyl-L-methionine (SAM) to carboxy-S-adenosyl-L-methionine (Cx-SAM). The sequence is that of Carboxy-S-adenosyl-L-methionine synthase from Helicobacter pylori (strain J99 / ATCC 700824) (Campylobacter pylori J99).